Here is an 87-residue protein sequence, read N- to C-terminus: Small ribosomal subunit protein bS20 (87 aa).

The protein belongs to the bacterial ribosomal protein bS20 family.

Its function is as follows. Binds directly to 16S ribosomal RNA. The polypeptide is Small ribosomal subunit protein bS20 (Rhizorhabdus wittichii (strain DSM 6014 / CCUG 31198 / JCM 15750 / NBRC 105917 / EY 4224 / RW1) (Sphingomonas wittichii)).